Here is a 362-residue protein sequence, read N- to C-terminus: Molybdenum import ATP-binding protein ModC (362 aa).

One can recognise an ABC transporter domain in the interval 2-236 (ASPIEVRLHM…LDLPLAMGGD (235 aa)). 34–41 (GPSGSGKT) provides a ligand contact to ATP. Residues 297–362 (QSSILNRLPV…AQIKAVAVLA (66 aa)) enclose the Mop domain.

This sequence belongs to the ABC transporter superfamily. Molybdate importer (TC 3.A.1.8) family. In terms of assembly, the complex is composed of two ATP-binding proteins (ModC), two transmembrane proteins (ModB) and a solute-binding protein (ModA).

It is found in the cell inner membrane. It catalyses the reaction molybdate(out) + ATP + H2O = molybdate(in) + ADP + phosphate + H(+). Its function is as follows. Part of the ABC transporter complex ModABC involved in molybdenum import. Responsible for energy coupling to the transport system. The sequence is that of Molybdenum import ATP-binding protein ModC from Pseudomonas savastanoi pv. phaseolicola (strain 1448A / Race 6) (Pseudomonas syringae pv. phaseolicola (strain 1448A / Race 6)).